Here is a 218-residue protein sequence, read N- to C-terminus: Thiopurine S-methyltransferase (218 aa).

The S-adenosyl-L-methionine site is built by W10, L45, E66, and R123.

It belongs to the class I-like SAM-binding methyltransferase superfamily. TPMT family.

Its subcellular location is the cytoplasm. It carries out the reaction S-adenosyl-L-methionine + a thiopurine = S-adenosyl-L-homocysteine + a thiopurine S-methylether.. The polypeptide is Thiopurine S-methyltransferase (Shewanella baltica (strain OS185)).